A 164-amino-acid chain; its full sequence is Cyanate hydratase (164 aa).

Catalysis depends on residues R90, E93, and S116.

The protein belongs to the cyanase family.

The enzyme catalyses cyanate + hydrogencarbonate + 3 H(+) = NH4(+) + 2 CO2. In terms of biological role, catalyzes the reaction of cyanate with bicarbonate to produce ammonia and carbon dioxide. The protein is Cyanate hydratase of Vitis vinifera (Grape).